A 360-amino-acid chain; its full sequence is Probable ribonucleoside-diphosphate reductase small subunit 376L (360 aa).

The Fe cation site is built by D67, E98, and H101. Y105 is a catalytic residue. Fe cation contacts are provided by E172, E206, and H209.

This sequence belongs to the ribonucleoside diphosphate reductase small chain family. Heterotetramer composed of a homodimer of the large subunit (R1) and a homodimer of the small subunit (R2). Larger multisubunit protein complex are also active, composed of (R1)n(R2)n. Requires Fe cation as cofactor.

It carries out the reaction a 2'-deoxyribonucleoside 5'-diphosphate + [thioredoxin]-disulfide + H2O = a ribonucleoside 5'-diphosphate + [thioredoxin]-dithiol. Ribonucleoside-diphosphate reductase holoenzyme provides the precursors necessary for viral DNA synthesis. Allows virus growth in non-dividing cells. Catalyzes the biosynthesis of deoxyribonucleotides from the corresponding ribonucleotides. This is Probable ribonucleoside-diphosphate reductase small subunit 376L from Acheta domesticus (House cricket).